Reading from the N-terminus, the 225-residue chain is Enolase-phosphatase E1 (225 aa).

This sequence belongs to the HAD-like hydrolase superfamily. MasA/MtnC family. In terms of assembly, monomer. Mg(2+) serves as cofactor.

It catalyses the reaction 5-methylsulfanyl-2,3-dioxopentyl phosphate + H2O = 1,2-dihydroxy-5-(methylsulfanyl)pent-1-en-3-one + phosphate. Its pathway is amino-acid biosynthesis; L-methionine biosynthesis via salvage pathway; L-methionine from S-methyl-5-thio-alpha-D-ribose 1-phosphate: step 3/6. It participates in amino-acid biosynthesis; L-methionine biosynthesis via salvage pathway; L-methionine from S-methyl-5-thio-alpha-D-ribose 1-phosphate: step 4/6. Bifunctional enzyme that catalyzes the enolization of 2,3-diketo-5-methylthiopentyl-1-phosphate (DK-MTP-1-P) into the intermediate 2-hydroxy-3-keto-5-methylthiopentenyl-1-phosphate (HK-MTPenyl-1-P), which is then dephosphorylated to form the acireductone 1,2-dihydroxy-3-keto-5-methylthiopentene (DHK-MTPene). This is Enolase-phosphatase E1 from Pseudomonas aeruginosa (strain UCBPP-PA14).